The sequence spans 170 residues: MSLSGPRIGRAHQQQGDTMAINVEPALSPHLVVDDAASAIDFYVKAFDAVELGRVPGPDGKLIHAALRINGFTVMLNDDVPQMCGGKSMTPTSLGGTPVTIHLTVTDVDAKFQRALNAGATVVTALEDQLWGDRYGVVADPFGHHWSLGQPVREVNMDEIQAAMSSQGDG.

The 127-residue stretch at 25–151 (PALSPHLVVD…FGHHWSLGQP (127 aa)) folds into the VOC domain.

This is an uncharacterized protein from Mycobacterium tuberculosis (strain CDC 1551 / Oshkosh).